The following is a 134-amino-acid chain: Holo-[acyl-carrier-protein] synthase (134 aa).

Mg(2+)-binding residues include Asp8 and Glu59.

The protein belongs to the P-Pant transferase superfamily. AcpS family. Mg(2+) is required as a cofactor.

The protein localises to the cytoplasm. It carries out the reaction apo-[ACP] + CoA = holo-[ACP] + adenosine 3',5'-bisphosphate + H(+). In terms of biological role, transfers the 4'-phosphopantetheine moiety from coenzyme A to a Ser of acyl-carrier-protein. In Zymomonas mobilis subsp. mobilis (strain ATCC 31821 / ZM4 / CP4), this protein is Holo-[acyl-carrier-protein] synthase.